We begin with the raw amino-acid sequence, 549 residues long: O-fucosyltransferase 29 (549 aa).

A helical; Signal-anchor for type II membrane protein membrane pass occupies residues 43–63 (TVMWTWVCGFMLFSLGVISLF). Residue Asn152 is glycosylated (N-linked (GlcNAc...) asparagine). Residue 292–294 (HLR) participates in substrate binding. N-linked (GlcNAc...) asparagine glycans are attached at residues Asn359 and Asn527. The tract at residues 506 to 549 (PFSYDKTSTDDEEEDMSEENHNSTSPGHVHLSSADNERDEVFPD) is disordered. Residues 540–549 (DNERDEVFPD) show a composition bias toward basic and acidic residues.

Belongs to the glycosyltransferase GT106 family.

It localises to the membrane. It participates in glycan metabolism. This Arabidopsis thaliana (Mouse-ear cress) protein is O-fucosyltransferase 29.